An 891-amino-acid polypeptide reads, in one-letter code: Alanine--tRNA ligase (891 aa).

Zn(2+)-binding residues include His-564, His-568, Cys-677, and His-681.

The protein belongs to the class-II aminoacyl-tRNA synthetase family. The cofactor is Zn(2+).

It is found in the cytoplasm. It carries out the reaction tRNA(Ala) + L-alanine + ATP = L-alanyl-tRNA(Ala) + AMP + diphosphate. Its function is as follows. Catalyzes the attachment of alanine to tRNA(Ala) in a two-step reaction: alanine is first activated by ATP to form Ala-AMP and then transferred to the acceptor end of tRNA(Ala). Also edits incorrectly charged Ser-tRNA(Ala) and Gly-tRNA(Ala) via its editing domain. This is Alanine--tRNA ligase from Rhodopseudomonas palustris (strain BisA53).